Consider the following 159-residue polypeptide: Dihydrofolate reductase (159 aa).

The 156-residue stretch at 2 to 157 folds into the DHFR domain; sequence TLSILVAHDL…IPHTFLHLIR (156 aa). A substrate-binding site is contributed by 6 to 8; it reads LVA. NADP(+) is bound by residues 7–8 and 15–20; these read VA and IGFENQ. Asp28 contacts substrate. Residue 44 to 47 coordinates NADP(+); the sequence is GRKT. Arg58 lines the substrate pocket. NADP(+)-binding positions include 63–66 and 93–98; these read LTSD and FGGQIL. Residue Thr112 participates in substrate binding.

Belongs to the dihydrofolate reductase family.

The enzyme catalyses (6S)-5,6,7,8-tetrahydrofolate + NADP(+) = 7,8-dihydrofolate + NADPH + H(+). It functions in the pathway cofactor biosynthesis; tetrahydrofolate biosynthesis; 5,6,7,8-tetrahydrofolate from 7,8-dihydrofolate: step 1/1. Key enzyme in folate metabolism. Catalyzes an essential reaction for de novo glycine and purine synthesis, and for DNA precursor synthesis. This is Dihydrofolate reductase (folA) from Staphylococcus aureus (strain MW2).